The chain runs to 298 residues: Mitochondrial distribution and morphology protein 12 (298 aa).

The SMP-LTD domain maps to 1–298 (MSIELDWTGL…VYPHFYTLYL (298 aa)). A disordered region spans residues 118–142 (SEHEESLSRWSDTESETGTCDSSSL). The span at 133–142 (ETGTCDSSSL) shows a compositional bias: polar residues.

The protein belongs to the MDM12 family. In terms of assembly, component of the ER-mitochondria encounter structure (ERMES) or MDM complex, composed of MMM1, MDM10, MDM12 and MDM34. An MMM1 homodimer associates with one molecule of MDM12 on each side in a pairwise head-to-tail manner, and the SMP-LTD domains of MMM1 and MDM12 generate a continuous hydrophobic tunnel for phospholipid trafficking.

Its subcellular location is the mitochondrion outer membrane. The protein localises to the endoplasmic reticulum membrane. Component of the ERMES/MDM complex, which serves as a molecular tether to connect the endoplasmic reticulum (ER) and mitochondria. Components of this complex are involved in the control of mitochondrial shape and protein biogenesis, and function in nonvesicular lipid trafficking between the ER and mitochondria. MDM12 is required for the interaction of the ER-resident membrane protein MMM1 and the outer mitochondrial membrane-resident beta-barrel protein MDM10. The MDM12-MMM1 subcomplex functions in the major beta-barrel assembly pathway that is responsible for biogenesis of all mitochondrial outer membrane beta-barrel proteins, and acts in a late step after the SAM complex. The MDM10-MDM12-MMM1 subcomplex further acts in the TOM40-specific pathway after the action of the MDM12-MMM1 complex. Essential for establishing and maintaining the structure of mitochondria and maintenance of mtDNA nucleoids. This Malassezia globosa (strain ATCC MYA-4612 / CBS 7966) (Dandruff-associated fungus) protein is Mitochondrial distribution and morphology protein 12.